We begin with the raw amino-acid sequence, 494 residues long: MFEIKKICCIGAGYVGGPTCSVIAHMCPEIRVTVVDINESRINAWNSPTLPIYEPGLKEVVESCRGKNLFFSTNIDDAIKEADLVFISVNTPTKTYGMGKGRAADLKYIEACARRIVQNSHGYKIVTEKSTVPVRAAESIRRIFDANTKPNLNLQVLSNPEFLAEGTAIKDLKNPDRVLIGGDETPEGQRAVQALCAVYEHWVPREKILTTNTWSSELSKLTANAFLAQRISSINSISALCEATGADVEEVATAIGMDQRIGNKFLKASVGFGGSCFQKDVLNLVYLCEALNLPEVARYWQQVIDMNDYQRRRFASRIIDSLFNTVTDKKIAILGFAFKKDTGDTRESSSIYISKYLMDEGAHLHIYDPKVPREQIVVDLSHPGVSKDDQVARLVTISKDPYEACDGAHAVVICTEWDMFKELDYERIHKKMLKPAFIFDGRRVLDGLHNELQTIGFQIETIGKKVSSKRIPYAPSGEIPKFSLQDMPNKKPRV.

Residues 11–16 (GAGYVG), D36, R41, and 89–93 (VNTPT) contribute to the NAD(+) site. Residues 88 to 110 (SVNTPTKTYGMGKGRAADLKYIE) form a disordered region. At K107 the chain carries N6-acetyllysine. The segment at 129–135 (KSTVPVR) is allosteric switch region. 130 to 132 (STV) provides a ligand contact to NAD(+). E161 functions as the Proton donor/acceptor in the catalytic mechanism. Residues 161–165 (EFLAE), 220–224 (KLTAN), R260, and 267–273 (KASVGFG) each bind substrate. Residue E165 participates in NAD(+) binding. The active-site Proton donor/acceptor is K220. The active-site Nucleophile is C276. Residue 276 to 279 (CFQK) participates in NAD(+) binding. Residues 321–325 (SLFNT) form an important for formation of active hexamer structure region. 338–339 (FK) contacts substrate. R346 provides a ligand contact to NAD(+). R442 is a binding site for substrate. The segment at 466–494 (VSSKRIPYAPSGEIPKFSLQDMPNKKPRV) is disordered. S476 bears the Phosphoserine mark.

Belongs to the UDP-glucose/GDP-mannose dehydrogenase family. In terms of assembly, homohexamer.

It carries out the reaction UDP-alpha-D-glucose + 2 NAD(+) + H2O = UDP-alpha-D-glucuronate + 2 NADH + 3 H(+). Its pathway is nucleotide-sugar biosynthesis; UDP-alpha-D-glucuronate biosynthesis; UDP-alpha-D-glucuronate from UDP-alpha-D-glucose: step 1/1. Its activity is regulated as follows. UDP-alpha-D-xylose (UDX) acts as a feedback inhibitor. It binds at the same site as the substrate, but functions as allosteric inhibitor by triggering a conformation change that disrupts the active hexameric ring structure and gives rise to an inactive, horseshoe-shaped hexamer. Catalyzes the formation of UDP-alpha-D-glucuronate, a constituent of complex glycosaminoglycans. Required for the biosynthesis of chondroitin sulfate and heparan sulfate. Required for embryonic development via its role in the biosynthesis of glycosaminoglycans. Required for proper brain and neuronal development. This chain is UDP-glucose 6-dehydrogenase (UGDH), found in Bos taurus (Bovine).